The following is a 1260-amino-acid chain: Methionine synthase (1260 aa).

The 321-residue stretch at 13–333 folds into the Hcy-binding domain; it reads FGIIRKILSE…DHIRAFCNAI (321 aa). Residues C255, C318, and C319 each contribute to the Zn(2+) site. In terms of domain architecture, Pterin-binding spans 364 to 625; the sequence is FVNVGERCNV…IPKDLLKLVE (262 aa). Residues 655 to 749 form the B12-binding N-terminal domain; the sequence is EVEEWRNKPV…FMEEEKRLKR (95 aa). Methylcob(III)alamin-binding positions include E699, 775-779, H778, S823, T827, and A879; that span reads GDVHD. In terms of domain architecture, B12-binding spans 766 to 883; it reads GVVVLATVKG…VHVLDASRSV (118 aa). The region spanning 916 to 1256 is the AdoMet activation domain; that stretch reads SLKDRKYTSL…LSSILSYDRL (341 aa). Residues D966, R1163, and 1218–1219 each bind S-adenosyl-L-methionine; that span reads YF.

Belongs to the vitamin-B12 dependent methionine synthase family. It depends on methylcob(III)alamin as a cofactor. Zn(2+) is required as a cofactor.

The catalysed reaction is (6S)-5-methyl-5,6,7,8-tetrahydrofolate + L-homocysteine = (6S)-5,6,7,8-tetrahydrofolate + L-methionine. It participates in amino-acid biosynthesis; L-methionine biosynthesis via de novo pathway; L-methionine from L-homocysteine (MetH route): step 1/1. Its function is as follows. Catalyzes the transfer of a methyl group from methyl-cobalamin to homocysteine, yielding enzyme-bound cob(I)alamin and methionine. Subsequently, remethylates the cofactor using methyltetrahydrofolate. In Dictyostelium discoideum (Social amoeba), this protein is Methionine synthase (mtr).